The primary structure comprises 302 residues: Bifunctional phosphoglucose/phosphomannose isomerase (302 aa).

An SIS domain is found at Val27–Pro160. 6 residues coordinate D-fructose 6-phosphate: Gly47, Ser48, Ser87, Ser89, Thr92, and Arg135. Gly47, Ser48, Ser87, Ser89, Thr92, and Arg135 together coordinate D-glucose 6-phosphate. Glu203 serves as the catalytic Proton acceptor. Positions 219 and 298 each coordinate D-fructose 6-phosphate. D-glucose 6-phosphate-binding residues include His219 and Lys298. His219 serves as the catalytic Proton donor. Lys298 serves as the catalytic Proton acceptor.

This sequence belongs to the PGI/PMI family. In terms of assembly, homodimer.

The protein resides in the cytoplasm. The catalysed reaction is alpha-D-glucose 6-phosphate = beta-D-fructose 6-phosphate. It catalyses the reaction D-mannose 6-phosphate = D-fructose 6-phosphate. Inhibited by 5-phosphoarabinonate (PAB) and 6-phosphogluconate. Functionally, dual specificity isomerase that catalyzes the isomerization of both glucose-6-phosphate and mannose-6-phosphate to fructose-6-phosphate with similar catalytic efficiency. This chain is Bifunctional phosphoglucose/phosphomannose isomerase, found in Pyrobaculum aerophilum (strain ATCC 51768 / DSM 7523 / JCM 9630 / CIP 104966 / NBRC 100827 / IM2).